Here is a 562-residue protein sequence, read N- to C-terminus: MGQTPSVESQESKETKNEMPELKSREDILDFFNNRSLSILLPMEIECFKSRLGDKDLSDPLTKDEFNTLLRIADSNSQLQILLWNFFLKISAFPFLSNRSESMTGFGILKGIILLTRERIKKYLGWSNAKLIKLIFIGLTSQEKVGVKTEASVFKIQHVLDTLDGIDLASSTVKDTDMLSFITWLLLLSVHCPTSNCKLNEKSLYDKWKDYEIVASSMVRSMNKKITTTGKGIGISYSDFSHTIVAVSKNVMSPLENIVEHMLYKQDDLLEFPCLDTFLKETKLMTYPLVAQLCTVLPNEIVMSQLQKLYVGRESGYSMRSLQSKVFNWKAATILLVSGTRIVDDIEYSENKNPRYKRFLEEYPKLKDEDQEMDDCHNLKKKVTFAVYIDEPWRVTNKNYFGEKRTSIIELSPRQDKFNSLKVGSVYFNTIGGGIGIGNNQPVTKLNSVRYAPGNVSLTLDNTLEFGVFRHTGYGGTIGPSELLKKNNEENKAFEIRFLIRDVEVWGCGGEKELEEQLREWKWEEAEAKRRQEINLKTMGEDRALLEMAGIIGQHGQSGGSI.

The interval 1-21 (MGQTPSVESQESKETKNEMPE) is disordered. Residues 10-21 (QESKETKNEMPE) show a composition bias toward basic and acidic residues. One can recognise a TLDc domain in the interval 283–509 (KLMTYPLVAQ…IRDVEVWGCG (227 aa)).

It belongs to the RTC5 family.

It localises to the cytoplasm. May be involved in a process influencing telomere capping. This is Restriction of telomere capping protein 5 (RTC5) from Vanderwaltozyma polyspora (strain ATCC 22028 / DSM 70294 / BCRC 21397 / CBS 2163 / NBRC 10782 / NRRL Y-8283 / UCD 57-17) (Kluyveromyces polysporus).